The sequence spans 130 residues: MAKAPARSTRKRAKRQVADGMAHIHASFNNTIVTITDRSGNALAWATSGGSGFRGSRKSTPFAAQVAAERAGVAAQEYGLKNLEVFVKGPGPGRESAIRALNATGYKITNITDVTPIPHNGCRPPKKRRV.

This sequence belongs to the universal ribosomal protein uS11 family. As to quaternary structure, part of the 30S ribosomal subunit. Interacts with proteins S7 and S18. Binds to IF-3.

Functionally, located on the platform of the 30S subunit, it bridges several disparate RNA helices of the 16S rRNA. Forms part of the Shine-Dalgarno cleft in the 70S ribosome. This chain is Small ribosomal subunit protein uS11, found in Alteromonas mediterranea (strain DSM 17117 / CIP 110805 / LMG 28347 / Deep ecotype).